Consider the following 340-residue polypeptide: L-threonine 3-dehydrogenase (340 aa).

C38 contributes to the Zn(2+) binding site. Residues T40 and H43 each act as charge relay system in the active site. Residues H63, E64, C93, C96, C99, and C107 each contribute to the Zn(2+) site. NAD(+) is bound by residues I175, D195, R200, 262–264, and 286–287; these read LGI and IY.

This sequence belongs to the zinc-containing alcohol dehydrogenase family. As to quaternary structure, homotetramer. Zn(2+) serves as cofactor.

It localises to the cytoplasm. It catalyses the reaction L-threonine + NAD(+) = (2S)-2-amino-3-oxobutanoate + NADH + H(+). The protein operates within amino-acid degradation; L-threonine degradation via oxydo-reductase pathway; glycine from L-threonine: step 1/2. Catalyzes the NAD(+)-dependent oxidation of L-threonine to 2-amino-3-ketobutyrate. This chain is L-threonine 3-dehydrogenase, found in Legionella pneumophila subsp. pneumophila (strain Philadelphia 1 / ATCC 33152 / DSM 7513).